A 398-amino-acid polypeptide reads, in one-letter code: Glucose-1-phosphate adenylyltransferase (398 aa).

Residues Y100, G165, E180 to K181, and S191 contribute to the alpha-D-glucose 1-phosphate site.

It belongs to the bacterial/plant glucose-1-phosphate adenylyltransferase family. As to quaternary structure, homotetramer.

It catalyses the reaction alpha-D-glucose 1-phosphate + ATP + H(+) = ADP-alpha-D-glucose + diphosphate. It functions in the pathway glycan biosynthesis; glycogen biosynthesis. Functionally, involved in the biosynthesis of ADP-glucose, a building block required for the elongation reactions to produce glycogen. Catalyzes the reaction between ATP and alpha-D-glucose 1-phosphate (G1P) to produce pyrophosphate and ADP-Glc. This chain is Glucose-1-phosphate adenylyltransferase, found in Desulfitobacterium hafniense (strain DSM 10664 / DCB-2).